A 156-amino-acid chain; its full sequence is 6,7-dimethyl-8-ribityllumazine synthase (156 aa).

5-amino-6-(D-ribitylamino)uracil-binding positions include Phe22, 57 to 59 (AVE), and 81 to 83 (SVI). A (2S)-2-hydroxy-3-oxobutyl phosphate-binding site is contributed by 86 to 87 (GT). Catalysis depends on His89, which acts as the Proton donor. Phe114 serves as a coordination point for 5-amino-6-(D-ribitylamino)uracil. Residue Arg128 coordinates (2S)-2-hydroxy-3-oxobutyl phosphate.

The protein belongs to the DMRL synthase family. In terms of assembly, forms an icosahedral capsid composed of 60 subunits, arranged as a dodecamer of pentamers.

It catalyses the reaction (2S)-2-hydroxy-3-oxobutyl phosphate + 5-amino-6-(D-ribitylamino)uracil = 6,7-dimethyl-8-(1-D-ribityl)lumazine + phosphate + 2 H2O + H(+). The protein operates within cofactor biosynthesis; riboflavin biosynthesis; riboflavin from 2-hydroxy-3-oxobutyl phosphate and 5-amino-6-(D-ribitylamino)uracil: step 1/2. Functionally, catalyzes the formation of 6,7-dimethyl-8-ribityllumazine by condensation of 5-amino-6-(D-ribitylamino)uracil with 3,4-dihydroxy-2-butanone 4-phosphate. This is the penultimate step in the biosynthesis of riboflavin. The sequence is that of 6,7-dimethyl-8-ribityllumazine synthase from Aliivibrio fischeri (strain ATCC 700601 / ES114) (Vibrio fischeri).